The following is a 255-amino-acid chain: MLQISHLYADYGGKPALEDINLTLESGELLVVLGPSGCGKTTLLNLIAGFVPYQHGSIQLAGKRIEGPGAERGVVFQNEGLLPWRNVQDNVAFGLQLAGIEKMQRLEIAHQMLKKVGLEGAEKRYIWQLSDGQRQRVGIARALAANPQLLLLDEPFGAQDAFTRDQMQTLLLKLWQETGKQVLLITHDIEEAVFMATELVLLSSGPGRVLERLRLNFARRFVAGESSRSIKSDPQFIAMREYVLSRVFEQREAFS.

The region spanning 2–229 (LQISHLYADY…RFVAGESSRS (228 aa)) is the ABC transporter domain. 34–41 (GPSGCGKT) contacts ATP.

This sequence belongs to the ABC transporter superfamily. Taurine importer (TC 3.A.1.17.1) family. In terms of assembly, the complex is composed of two ATP-binding proteins (TauB), two transmembrane proteins (TauC) and a solute-binding protein (TauA).

It is found in the cell inner membrane. It catalyses the reaction taurine(out) + ATP + H2O = taurine(in) + ADP + phosphate + H(+). In terms of biological role, part of the ABC transporter complex TauABC involved in taurine import. Responsible for energy coupling to the transport system. The protein is Taurine import ATP-binding protein TauB of Shigella flexneri serotype 5b (strain 8401).